The chain runs to 76 residues: Sec-independent protein translocase protein TatA (76 aa).

A helical transmembrane segment spans residues 1 to 21 (MGSFSIWHWLVVLAIVVLVFG). Residues 41–76 (EGMKGAEEESTPPPPAQQVTGHSIKSEIEEKDQTKV) form a disordered region. The segment covering 64 to 76 (IKSEIEEKDQTKV) has biased composition (basic and acidic residues).

This sequence belongs to the TatA/E family. The Tat system comprises two distinct complexes: a TatABC complex, containing multiple copies of TatA, TatB and TatC subunits, and a separate TatA complex, containing only TatA subunits. Substrates initially bind to the TatABC complex, which probably triggers association of the separate TatA complex to form the active translocon.

Its subcellular location is the cell inner membrane. In terms of biological role, part of the twin-arginine translocation (Tat) system that transports large folded proteins containing a characteristic twin-arginine motif in their signal peptide across membranes. TatA could form the protein-conducting channel of the Tat system. In Nitrosomonas europaea (strain ATCC 19718 / CIP 103999 / KCTC 2705 / NBRC 14298), this protein is Sec-independent protein translocase protein TatA.